Reading from the N-terminus, the 344-residue chain is Mitochondrial mRNA pseudouridine synthase RPUSD3 (344 aa).

The N-terminal 41 residues, 1–41, are a transit peptide targeting the mitochondrion; sequence MGGWRVLGQASGGWRRGLGIRATSTAAGFGTKARHQLQRRG. Residues 29–59 are disordered; it reads FGTKARHQLQRRGASKPSDPPGDQPFPGLLR. A compositionally biased stretch (basic residues) spans 32-42; sequence KARHQLQRRGA. Ser64 is subject to Phosphoserine.

This sequence belongs to the pseudouridine synthase RluA family. As to quaternary structure, forms a regulatory protein-RNA complex, consisting of RCC1L, NGRN, RPUSD3, RPUSD4, TRUB2, FASTKD2 and 16S mt-rRNA.

It is found in the mitochondrion matrix. It carries out the reaction a uridine in mRNA = a pseudouridine in mRNA. Functionally, catalyzes uridine to pseudouridine isomerization (pseudouridylation) of specific mitochondrial mRNAs (mt-mRNAs), a post-transcriptional modification necessary for their translation. Acts at position 390 in COXI mt-mRNA and at position 697-699 in mitochondrial COXIII mt-mRNA. As a component of a functional protein-RNA module, consisting of RCC1L, NGRN, RPUSD3, RPUSD4, TRUB2, FASTKD2 and 16S mitochondrial ribosomal RNA (16S mt-rRNA), controls 16S mt-rRNA abundance and may play a role in mitochondrial ribosome biogenesis. This is Mitochondrial mRNA pseudouridine synthase RPUSD3 (RPUSD3) from Bos taurus (Bovine).